Here is a 564-residue protein sequence, read N- to C-terminus: Dihydroxy-acid dehydratase (564 aa).

Asp-78 contributes to the Mg(2+) binding site. Residue Cys-119 coordinates [2Fe-2S] cluster. Asp-120 and Lys-121 together coordinate Mg(2+). Lys-121 carries the post-translational modification N6-carboxylysine. [2Fe-2S] cluster is bound at residue Cys-192. Glu-451 provides a ligand contact to Mg(2+). The active-site Proton acceptor is the Ser-477.

The protein belongs to the IlvD/Edd family. Homodimer. It depends on [2Fe-2S] cluster as a cofactor. Mg(2+) serves as cofactor.

The catalysed reaction is (2R)-2,3-dihydroxy-3-methylbutanoate = 3-methyl-2-oxobutanoate + H2O. It carries out the reaction (2R,3R)-2,3-dihydroxy-3-methylpentanoate = (S)-3-methyl-2-oxopentanoate + H2O. The protein operates within amino-acid biosynthesis; L-isoleucine biosynthesis; L-isoleucine from 2-oxobutanoate: step 3/4. It participates in amino-acid biosynthesis; L-valine biosynthesis; L-valine from pyruvate: step 3/4. Its function is as follows. Functions in the biosynthesis of branched-chain amino acids. Catalyzes the dehydration of (2R,3R)-2,3-dihydroxy-3-methylpentanoate (2,3-dihydroxy-3-methylvalerate) into 2-oxo-3-methylpentanoate (2-oxo-3-methylvalerate) and of (2R)-2,3-dihydroxy-3-methylbutanoate (2,3-dihydroxyisovalerate) into 2-oxo-3-methylbutanoate (2-oxoisovalerate), the penultimate precursor to L-isoleucine and L-valine, respectively. In Nitratiruptor sp. (strain SB155-2), this protein is Dihydroxy-acid dehydratase.